We begin with the raw amino-acid sequence, 403 residues long: Argininosuccinate synthase (403 aa).

Residues 13–21 (AYSGGLDTS) and alanine 40 contribute to the ATP site. L-citrulline contacts are provided by tyrosine 91 and serine 96. An ATP-binding site is contributed by glycine 121. L-aspartate contacts are provided by threonine 123, asparagine 127, and aspartate 128. Asparagine 127 is an L-citrulline binding site. Residues arginine 131, serine 180, serine 189, glutamate 265, and tyrosine 277 each coordinate L-citrulline.

Belongs to the argininosuccinate synthase family. Type 1 subfamily. As to quaternary structure, homotetramer.

It localises to the cytoplasm. The enzyme catalyses L-citrulline + L-aspartate + ATP = 2-(N(omega)-L-arginino)succinate + AMP + diphosphate + H(+). It participates in amino-acid biosynthesis; L-arginine biosynthesis; L-arginine from L-ornithine and carbamoyl phosphate: step 2/3. The protein is Argininosuccinate synthase of Leptospira interrogans serogroup Icterohaemorrhagiae serovar Lai (strain 56601).